Here is a 216-residue protein sequence, read N- to C-terminus: MLIDKTNISNIRREYISGQLRHTDLTNQPIQLFSVWLHQAYFSKIPDPTAMCLATVDHTGQPYQRVVLLKNFTNKEMIFYTNLSSRKAMHLANNPKVSLCFLWNVIDRQVIITGSVDKLPEKEVLKYFYTRPKNNQISTWVSNQSKVISSKDLLENKFLEFKKNHLHKKVPFPEFWGGYKININSMEFWQGGTHRLHDRFIYQRYKHTWRIYRLSP.

Substrate is bound by residues 12 to 15 (RREY) and Lys70. Residues 65–70 (RVVLLK), 80–81 (YT), Arg86, Lys87, and Gln109 each bind FMN. Positions 127 and 131 each coordinate substrate. Residues 144-145 (QS) and Trp189 contribute to the FMN site. 195–197 (RLH) is a substrate binding site. Position 199 (Arg199) interacts with FMN.

It belongs to the pyridoxamine 5'-phosphate oxidase family. Homodimer. It depends on FMN as a cofactor.

It carries out the reaction pyridoxamine 5'-phosphate + O2 + H2O = pyridoxal 5'-phosphate + H2O2 + NH4(+). The enzyme catalyses pyridoxine 5'-phosphate + O2 = pyridoxal 5'-phosphate + H2O2. It functions in the pathway cofactor metabolism; pyridoxal 5'-phosphate salvage; pyridoxal 5'-phosphate from pyridoxamine 5'-phosphate: step 1/1. It participates in cofactor metabolism; pyridoxal 5'-phosphate salvage; pyridoxal 5'-phosphate from pyridoxine 5'-phosphate: step 1/1. Its function is as follows. Catalyzes the oxidation of either pyridoxine 5'-phosphate (PNP) or pyridoxamine 5'-phosphate (PMP) into pyridoxal 5'-phosphate (PLP). In Blochmanniella pennsylvanica (strain BPEN), this protein is Pyridoxine/pyridoxamine 5'-phosphate oxidase.